The chain runs to 222 residues: MGQKVNPNGIRLGYIRDWRSTWYADSSRYATKLNEDIKVREFLHKKLAAAAVSKIQIERPAQNAKITIHTARSGIVIGKKGEDVEKLRAEVHKLMGIPVQINIEEVRKPEIDAKLVAESVAQQLEKRVMFRRAMKKAMQAAMKSGAKGIKIMVSGRLGGAEIARSEWARDGRVPLQTFRADVDYATAEALTTYGVIGVKVWIYKGEILPGQIAEKKNNKKRS.

Residues 39–107 (VREFLHKKLA…PVQINIEEVR (69 aa)) form the KH type-2 domain.

Belongs to the universal ribosomal protein uS3 family. As to quaternary structure, part of the 30S ribosomal subunit. Forms a tight complex with proteins S10 and S14.

Binds the lower part of the 30S subunit head. Binds mRNA in the 70S ribosome, positioning it for translation. The sequence is that of Small ribosomal subunit protein uS3 from Francisella tularensis subsp. tularensis (strain FSC 198).